The following is a 394-amino-acid chain: G2/mitotic-specific cyclin-B2 (394 aa).

This sequence belongs to the cyclin family. Cyclin AB subfamily. Interacts with the CDK1 protein kinase to form a serine/threonine kinase holoenzyme complex also known as maturation promoting factor (MPF). The cyclin subunit imparts substrate specificity to the complex.

In terms of biological role, essential for the control of the cell cycle at the G2/M (mitosis) transition. This Anguilla japonica (Japanese eel) protein is G2/mitotic-specific cyclin-B2 (ccnb2).